The chain runs to 429 residues: Serine hydroxymethyltransferase (429 aa).

Residues Leu133 and 137 to 139 (GHL) each bind (6S)-5,6,7,8-tetrahydrofolate. Lys243 bears the N6-(pyridoxal phosphate)lysine mark. Glu259 is a binding site for (6S)-5,6,7,8-tetrahydrofolate.

It belongs to the SHMT family. In terms of assembly, homodimer. It depends on pyridoxal 5'-phosphate as a cofactor.

The protein localises to the cytoplasm. It catalyses the reaction (6R)-5,10-methylene-5,6,7,8-tetrahydrofolate + glycine + H2O = (6S)-5,6,7,8-tetrahydrofolate + L-serine. The protein operates within one-carbon metabolism; tetrahydrofolate interconversion. It functions in the pathway amino-acid biosynthesis; glycine biosynthesis; glycine from L-serine: step 1/1. In terms of biological role, catalyzes the reversible interconversion of serine and glycine with tetrahydrofolate (THF) serving as the one-carbon carrier. This reaction serves as the major source of one-carbon groups required for the biosynthesis of purines, thymidylate, methionine, and other important biomolecules. Also exhibits THF-independent aldolase activity toward beta-hydroxyamino acids, producing glycine and aldehydes, via a retro-aldol mechanism. The protein is Serine hydroxymethyltransferase of Aster yellows witches'-broom phytoplasma (strain AYWB).